Reading from the N-terminus, the 242-residue chain is Probable 2-phosphosulfolactate phosphatase (242 aa).

It belongs to the ComB family. The cofactor is Mg(2+).

It catalyses the reaction (2R)-O-phospho-3-sulfolactate + H2O = (2R)-3-sulfolactate + phosphate. This chain is Probable 2-phosphosulfolactate phosphatase, found in Caldicellulosiruptor saccharolyticus (strain ATCC 43494 / DSM 8903 / Tp8T 6331).